The primary structure comprises 60 residues: LECNQLIPIAHKTCPEGKNLCYKMFMVSTSTVPVKRGCIDVCPKNSALVKYVCCNTDRCN.

4 disulfide bridges follow: Cys3-Cys21, Cys14-Cys38, Cys42-Cys53, and Cys54-Cys59.

It belongs to the three-finger toxin family. Short-chain subfamily. Type IA cytotoxin sub-subfamily. Monomer in solution; Homodimer and oligomer in the presence of negatively charged lipids forming a pore with a size ranging between 20 and 30 Angstroms. Expressed by the venom gland.

It is found in the secreted. Its subcellular location is the target cell membrane. Shows cytolytic activity on many different cells by forming pore in lipid membranes. In vivo, increases heart rate or kills the animal by cardiac arrest. In addition, it binds to heparin with high affinity, interacts with Kv channel-interacting protein 1 (KCNIP1) in a calcium-independent manner, and binds to integrin alpha-V/beta-3 (ITGAV/ITGB3) with moderate affinity. This Naja annulifera (Banded Egyptian cobra) protein is Cytotoxin 10.